Consider the following 376-residue polypeptide: 23S rRNA (uracil(747)-C(5))-methyltransferase RlmC (376 aa).

[4Fe-4S] cluster contacts are provided by cysteine 3, cysteine 11, cysteine 14, and cysteine 88. The S-adenosyl-L-methionine site is built by glutamine 213, phenylalanine 242, glutamate 263, and asparagine 308. Catalysis depends on cysteine 335, which acts as the Nucleophile.

It belongs to the class I-like SAM-binding methyltransferase superfamily. RNA M5U methyltransferase family. RlmC subfamily.

The enzyme catalyses uridine(747) in 23S rRNA + S-adenosyl-L-methionine = 5-methyluridine(747) in 23S rRNA + S-adenosyl-L-homocysteine + H(+). Catalyzes the formation of 5-methyl-uridine at position 747 (m5U747) in 23S rRNA. The chain is 23S rRNA (uracil(747)-C(5))-methyltransferase RlmC from Vibrio vulnificus (strain CMCP6).